The primary structure comprises 543 residues: Chaperonin GroEL (543 aa).

Residues 29-32 (TLGP), K50, 86-90 (DGTTT), G415, and D495 contribute to the ATP site.

Belongs to the chaperonin (HSP60) family. In terms of assembly, forms a cylinder of 14 subunits composed of two heptameric rings stacked back-to-back. Interacts with the co-chaperonin GroES.

Its subcellular location is the cytoplasm. The enzyme catalyses ATP + H2O + a folded polypeptide = ADP + phosphate + an unfolded polypeptide.. In terms of biological role, together with its co-chaperonin GroES, plays an essential role in assisting protein folding. The GroEL-GroES system forms a nano-cage that allows encapsulation of the non-native substrate proteins and provides a physical environment optimized to promote and accelerate protein folding. The protein is Chaperonin GroEL of Karelsulcia muelleri (strain GWSS) (Sulcia muelleri).